The chain runs to 181 residues: Oligoribonuclease (181 aa).

In terms of domain architecture, Exonuclease spans 8-171 (LIWIDLEMTG…DDIRESVAEL (164 aa)). The active site involves Y129.

The protein belongs to the oligoribonuclease family.

It localises to the cytoplasm. 3'-to-5' exoribonuclease specific for small oligoribonucleotides. The chain is Oligoribonuclease from Sodalis glossinidius (strain morsitans).